The chain runs to 837 residues: Periplasmic nitrate reductase (837 aa).

The tat-type signal signal peptide spans 1–33 (MTTPKLDRRQVLKLEAAAMAALAGGIAMPAAAA). Residues 44–100 (LKWDKAACRFCGTGCSVMVATKENRVVATHGDTKSEVNRGLNCVKGYFLSKIMYGHD) form the 4Fe-4S Mo/W bis-MGD-type domain. Residues C51, C54, C58, and C86 each coordinate [4Fe-4S] cluster. Mo-bis(molybdopterin guanine dinucleotide) is bound by residues K88, Q155, N180, C184, 217–224 (WGSNMAEM), 248–252 (STFEH), 267–269 (QTD), M378, Q382, N488, 514–515 (SD), K537, D564, and 724–733 (TGRVLEHWHS). Position 800 (W800) interacts with substrate. 2 residues coordinate Mo-bis(molybdopterin guanine dinucleotide): N808 and K825.

This sequence belongs to the prokaryotic molybdopterin-containing oxidoreductase family. NasA/NapA/NarB subfamily. As to quaternary structure, component of the periplasmic nitrate reductase NapAB complex composed of NapA and NapB. [4Fe-4S] cluster serves as cofactor. Mo-bis(molybdopterin guanine dinucleotide) is required as a cofactor. In terms of processing, predicted to be exported by the Tat system. The position of the signal peptide cleavage has not been experimentally proven.

The protein localises to the periplasm. The enzyme catalyses 2 Fe(II)-[cytochrome] + nitrate + 2 H(+) = 2 Fe(III)-[cytochrome] + nitrite + H2O. In terms of biological role, catalytic subunit of the periplasmic nitrate reductase complex NapAB. Receives electrons from NapB and catalyzes the reduction of nitrate to nitrite. This is Periplasmic nitrate reductase from Rhodopseudomonas palustris (strain BisB18).